The chain runs to 173 residues: Adenine phosphoribosyltransferase (173 aa).

This sequence belongs to the purine/pyrimidine phosphoribosyltransferase family. In terms of assembly, homodimer.

The protein localises to the cytoplasm. It catalyses the reaction AMP + diphosphate = 5-phospho-alpha-D-ribose 1-diphosphate + adenine. It functions in the pathway purine metabolism; AMP biosynthesis via salvage pathway; AMP from adenine: step 1/1. Its function is as follows. Catalyzes a salvage reaction resulting in the formation of AMP, that is energically less costly than de novo synthesis. The chain is Adenine phosphoribosyltransferase from Methanococcus vannielii (strain ATCC 35089 / DSM 1224 / JCM 13029 / OCM 148 / SB).